The primary structure comprises 186 residues: MKLKKAERRQAIQKAIELNPFITDSELCEQFEVSIQTIRLDRTNLSIPELRKRIKLVAEQNYEQIRALEANEVVGDLIQVEPNISAQSLIEITEESVFTKTQIARGHVLFAQANSLCVALIHKSTVLTQESNVAFIEKVKLNDTVRAEAHVVNKTSHHYVIEVNSYVRDTIVFKGTFKMFYISEDE.

The MaoC-like domain maps to 98–168; it reads FTKTQIARGH…YVIEVNSYVR (71 aa).

Belongs to the FapR family.

Its function is as follows. Transcriptional factor involved in regulation of membrane lipid biosynthesis by repressing genes involved in fatty acid and phospholipid metabolism. In Staphylococcus haemolyticus (strain JCSC1435), this protein is Transcription factor FapR.